Here is a 136-residue protein sequence, read N- to C-terminus: Globin CTP-III (136 aa).

The Globin domain maps to 1–136; that stretch reads LSADQISTVQ…TFFGMIFSKM (136 aa). A heme b-binding site is contributed by His-87.

This sequence belongs to the globin family. Monomer.

The sequence is that of Globin CTP-III from Chironomus thummi piger (Midge).